The primary structure comprises 172 residues: Trypsin inhibitor DE-3 (172 aa).

2 cysteine pairs are disulfide-bonded: Cys-39/Cys-83 and Cys-132/Cys-139.

It belongs to the protease inhibitor I3 (leguminous Kunitz-type inhibitor) family.

Functionally, inhibition of trypsin. The protein is Trypsin inhibitor DE-3 of Erythrina latissima (Broad-leaved coral tree).